Reading from the N-terminus, the 656-residue chain is Anion exchange transporter (656 aa).

Residues 1–75 lie on the Cytoplasmic side of the membrane; that stretch reads MTGAKRKKKS…LAFAVLSSVH (75 aa). A helical membrane pass occupies residues 76–96; sequence PVFGLYGSLFPAIIYAIFGMG. Topologically, residues 97–144 are extracellular; sequence HHVATGTFALTSLISANAVERIVPQNMQNLTTQSNTSVLGLSDFEMQR. A helical membrane pass occupies residues 145 to 165; the sequence is IHVAAAVSFLGGVIQVAMFVL. Position 166 (Gln-166) is a topological domain, cytoplasmic. The chain crosses the membrane as a helical span at residues 167–187; sequence LGSATFVVTEPVISAMTTGAA. Residues 188–202 are Extracellular-facing; sequence THVVTSQVKYLLGMK. Residues 203–223 form a helical membrane-spanning segment; that stretch reads MPYISGPLGFFYIYAYVFENI. The Cytoplasmic segment spans residues 224 to 227; it reads KSVR. Residues 228 to 248 traverse the membrane as a helical segment; sequence LEALLLSLLSIVVLVLVKELN. The Extracellular segment spans residues 249 to 254; sequence EQFKRK. A helical transmembrane segment spans residues 255-275; that stretch reads IKVVLPVDLVLIIAASFACYC. Topologically, residues 276–306 are cytoplasmic; that stretch reads TNMENTYGLEVVGHIPQGIPSPRAPPMNILS. A helical membrane pass occupies residues 307-327; sequence AVITEAFGVALVGYVASLALA. Residues 328–343 lie on the Extracellular side of the membrane; the sequence is QGSAKKFKYSIDDNQE. Residues 344-364 traverse the membrane as a helical segment; it reads FLAHGLSNIVSSFFFCIPSAA. Topologically, residues 365-383 are cytoplasmic; the sequence is AMGRTAGLYSTGAKTQVAC. Transmembrane regions (helical) follow at residues 384-404 and 405-425; these read LISC…LYWL and PMCV…IQFR. Topologically, residues 426 to 448 are extracellular; that stretch reads DLKKYWNVDKIDWGIWVSTYVFT. The chain crosses the membrane as a helical span at residues 449-469; that stretch reads ICFAANVGLLFGVVCTIAIVI. The Cytoplasmic portion of the chain corresponds to 470–656; the sequence is GRFPRAMTVS…LSKLSDHSEV (187 aa). The STAS domain maps to 492–641; that stretch reads TEMDSETLQQ…ESVSAAISHI (150 aa). Residues 641 to 656 form a membrane targeting region; the sequence is IHSNKNLSKLSDHSEV.

This sequence belongs to the SLC26A/SulP transporter (TC 2.A.53) family. In terms of tissue distribution, expressed in the thyroid gland (at protein level). Expressed in tonsillar high endothelial venule endothelial cells (HEVEC), placenta and in testis, expressed in a subgroup of basal cells in the epididymal ducts.

It is found in the basolateral cell membrane. The protein resides in the recycling endosome membrane. Its subcellular location is the apical cell membrane. The protein localises to the lateral cell membrane. The catalysed reaction is chloride(in) = chloride(out). It catalyses the reaction iodide(out) = iodide(in). It carries out the reaction bromide(in) = bromide(out). The enzyme catalyses oxalate(in) = oxalate(out). The catalysed reaction is nitrate(in) = nitrate(out). It catalyses the reaction sulfate(in) = sulfate(out). It carries out the reaction thiocyanate(in) = thiocyanate(out). The enzyme catalyses D-gluconate(in) = D-gluconate(out). The catalysed reaction is hydrogencarbonate(in) = hydrogencarbonate(out). It catalyses the reaction hydrogencarbonate(in) + chloride(out) = hydrogencarbonate(out) + chloride(in). With respect to regulation, is active at both alkaline and acidic pH. Activity is inhibited by 4,4'-Di-isothiocyanatostilbene-2,2'-disulfonic acid (DIDS - an inhibitor of several anion channels and transporters). In terms of biological role, acts as an anion channel mediating the transport of chloride, sulfate and oxalate ions. Mediates the transport of bromide, iodide, nitrate, gluconate, thiocyanate and bicarbonate ions. Its permeability towards bicarbonate is weak and increases when pH is above 7. Mediates thiocyanate transport in retinal pigment epithelium cells. Mediates iodide transport in the thyroid gland, playing an important role in the synthesis of thyroid hormones and the maintenance of thyroid function. Although it is an anion channel, according to PubMed:12736153 and PubMed:32119864 it has been shown to exhibit chloride-bicarbonate exchanger activity. In Homo sapiens (Human), this protein is Anion exchange transporter.